A 552-amino-acid chain; its full sequence is uncharacterized protein (552 aa).

This is an uncharacterized protein from Bacillus subtilis (strain 168).